The primary structure comprises 319 residues: Acetyl esterase (319 aa).

The Involved in the stabilization of the negatively charged intermediate by the formation of the oxyanion hole motif lies at 91–93 (HGG). Residues Ser-165, Asp-262, and His-292 contribute to the active site.

The protein belongs to the 'GDXG' lipolytic enzyme family. In terms of assembly, homodimer. Interacts with MalT and MelA.

The protein localises to the cytoplasm. In terms of biological role, displays esterase activity towards short chain fatty esters (acyl chain length of up to 8 carbons). Able to hydrolyze triacetylglycerol (triacetin) and tributyrylglycerol (tributyrin), but not trioleylglycerol (triolein) or cholesterol oleate. Negatively regulates MalT activity by antagonizing maltotriose binding. Inhibits MelA galactosidase activity. In Escherichia coli O17:K52:H18 (strain UMN026 / ExPEC), this protein is Acetyl esterase.